Here is a 967-residue protein sequence, read N- to C-terminus: Kinesin heavy chain (967 aa).

Residues 8-326 (NIKVICRVRP…LLFGQRAKTI (319 aa)) enclose the Kinesin motor domain. 85-92 (GQTSSGKT) serves as a coordination point for ATP. The segment at 173–314 (VSSPEEVMEV…PASYNESETK (142 aa)) is microtubule-binding. 2 disordered regions span residues 387-411 (VPAESPATSTTSLAGGLIASMNEGD) and 923-967 (KPIR…ESKA). Residues 392-861 (PATSTTSLAG…RDNADLRCEL (470 aa)) adopt a coiled-coil conformation. The interval 862-967 (PKLEKRLRAT…PIRMAPESKA (106 aa)) is globular. Positions 949 to 958 (QNGPMITSTP) are enriched in polar residues.

The protein belongs to the TRAFAC class myosin-kinesin ATPase superfamily. Kinesin family. Kinesin subfamily. Oligomer composed of two heavy chains and two light chains. Interacts with amyloid-beta precursor-like protein (via cytoplasmic domain).

Its subcellular location is the cytoplasm. It localises to the cytoskeleton. It is found in the cell projection. The protein localises to the axon. Kinesin is a microtubule-associated force-producing protein that may play a role in organelle transport. This is Kinesin heavy chain from Doryteuthis pealeii (Longfin inshore squid).